The primary structure comprises 91 residues: UPF0335 protein BRADO1188 (91 aa).

Belongs to the UPF0335 family.

The sequence is that of UPF0335 protein BRADO1188 from Bradyrhizobium sp. (strain ORS 278).